Here is a 195-residue protein sequence, read N- to C-terminus: Probable GTP-binding protein EngB (195 aa).

The 172-residue stretch at 24 to 195 (GLTEVALSGR…EIWNFIETYI (172 aa)) folds into the EngB-type G domain. Residues 32–39 (GRSNVGKS), 59–63 (GKTQT), 77–80 (DVPG), 144–147 (TKED), and 176–178 (YSS) each bind GTP. Residues serine 39 and threonine 61 each contribute to the Mg(2+) site.

The protein belongs to the TRAFAC class TrmE-Era-EngA-EngB-Septin-like GTPase superfamily. EngB GTPase family. Mg(2+) is required as a cofactor.

Necessary for normal cell division and for the maintenance of normal septation. This Staphylococcus epidermidis (strain ATCC 35984 / DSM 28319 / BCRC 17069 / CCUG 31568 / BM 3577 / RP62A) protein is Probable GTP-binding protein EngB.